The following is a 450-amino-acid chain: Glucose-6-phosphate isomerase (450 aa).

Position 39 is a phosphothreonine (T39). E291 acts as the Proton donor in catalysis. Catalysis depends on residues H312 and K426.

This sequence belongs to the GPI family.

The protein resides in the cytoplasm. It carries out the reaction alpha-D-glucose 6-phosphate = beta-D-fructose 6-phosphate. Its pathway is carbohydrate biosynthesis; gluconeogenesis. The protein operates within carbohydrate degradation; glycolysis; D-glyceraldehyde 3-phosphate and glycerone phosphate from D-glucose: step 2/4. Functionally, catalyzes the reversible isomerization of glucose-6-phosphate to fructose-6-phosphate. This Bacillus cytotoxicus (strain DSM 22905 / CIP 110041 / 391-98 / NVH 391-98) protein is Glucose-6-phosphate isomerase.